Here is a 442-residue protein sequence, read N- to C-terminus: Histidine--tRNA ligase (442 aa).

The protein belongs to the class-II aminoacyl-tRNA synthetase family. In terms of assembly, homodimer.

It localises to the cytoplasm. It catalyses the reaction tRNA(His) + L-histidine + ATP = L-histidyl-tRNA(His) + AMP + diphosphate + H(+). The polypeptide is Histidine--tRNA ligase (hisS) (Helicobacter pylori (strain J99 / ATCC 700824) (Campylobacter pylori J99)).